The primary structure comprises 344 residues: N-acetyl-gamma-glutamyl-phosphate reductase (344 aa).

The active site involves cysteine 150.

This sequence belongs to the NAGSA dehydrogenase family. Type 1 subfamily.

It is found in the cytoplasm. The catalysed reaction is N-acetyl-L-glutamate 5-semialdehyde + phosphate + NADP(+) = N-acetyl-L-glutamyl 5-phosphate + NADPH + H(+). It participates in amino-acid biosynthesis; L-arginine biosynthesis; N(2)-acetyl-L-ornithine from L-glutamate: step 3/4. Catalyzes the NADPH-dependent reduction of N-acetyl-5-glutamyl phosphate to yield N-acetyl-L-glutamate 5-semialdehyde. The sequence is that of N-acetyl-gamma-glutamyl-phosphate reductase from Azotobacter vinelandii (strain DJ / ATCC BAA-1303).